A 355-amino-acid polypeptide reads, in one-letter code: Zinc finger protein CONSTANS-LIKE 1 (355 aa).

Zn(2+) contacts are provided by C12, C15, C35, H40, C55, C58, C78, and H83. Residues 12–54 (CDTCRSAACTVYCRADSAYLCSSCDAQVHAANRLASRHERVRV) form a B box-type 1; atypical zinc finger. Residues 55 to 97 (CQSCERAPAAFFCKADAASLCTTCDSEIHSANPLARRHQRVPI) form a B box-type 2; atypical zinc finger. The segment covering 252 to 264 (ESTTSDATVSNPR) has biased composition (polar residues). The segment at 252 to 281 (ESTTSDATVSNPRSPKAVTDQPPYPPAQML) is disordered. Residues 286-328 (REARVLRYREKKKMRKFEKTIRYASRKAYAEKRPRIKGRFAKK) enclose the CCT domain.

This sequence belongs to the CONSTANS family. Highly expressed in leaves and at lower levels in stems, flowers and siliques. Not detected in roots.

It localises to the nucleus. Functionally, putative transcription factor that may be involved in the light input to the circadian clock but does not affect flowering time. This Arabidopsis thaliana (Mouse-ear cress) protein is Zinc finger protein CONSTANS-LIKE 1 (COL1).